The primary structure comprises 234 residues: Ubiquinone biosynthesis O-methyltransferase (234 aa).

S-adenosyl-L-methionine-binding residues include Arg-40, Gly-59, Asp-80, and Met-123.

This sequence belongs to the methyltransferase superfamily. UbiG/COQ3 family.

It catalyses the reaction a 3-demethylubiquinol + S-adenosyl-L-methionine = a ubiquinol + S-adenosyl-L-homocysteine + H(+). The catalysed reaction is a 3-(all-trans-polyprenyl)benzene-1,2-diol + S-adenosyl-L-methionine = a 2-methoxy-6-(all-trans-polyprenyl)phenol + S-adenosyl-L-homocysteine + H(+). Its pathway is cofactor biosynthesis; ubiquinone biosynthesis. Its function is as follows. O-methyltransferase that catalyzes the 2 O-methylation steps in the ubiquinone biosynthetic pathway. This is Ubiquinone biosynthesis O-methyltransferase from Coxiella burnetii (strain CbuK_Q154) (Coxiella burnetii (strain Q154)).